The following is a 220-amino-acid chain: Iron-sulfur cluster repair protein YtfE (220 aa).

This sequence belongs to the RIC family. YtfE subfamily. In terms of assembly, homodimer.

It is found in the cytoplasm. Its function is as follows. Di-iron-containing protein involved in the repair of iron-sulfur clusters damaged by oxidative and nitrosative stress conditions. The polypeptide is Iron-sulfur cluster repair protein YtfE (Escherichia coli O81 (strain ED1a)).